Consider the following 341-residue polypeptide: Eukaryotic translation initiation factor 3 subunit I (341 aa).

6 WD repeats span residues 8 to 47 (GHERSLNQIVFNSEGDLLFSASKDSVVNAWYTSNGERLGT), 56 to 95 (GHNGSVWTVAVDSQTRFLLTGGADNAMKLWEVKTGECLYT), 151 to 190 (LSGSRATVAIWAPLSDYIITGHESGKIAKYDVKTGEEVQA), 194 to 233 (EHSALISDIQLSPDGTYFITASKDKTARLWDIETLEVMKV), 235 to 274 (TTETPVNSAVITPDRPYIILGGGQDAMNVTTTSQRAGKFE), and 291 to 331 (GHFG…RSRP).

It belongs to the eIF-3 subunit I family. In terms of assembly, component of the eukaryotic translation initiation factor 3 (eIF-3) complex.

The protein resides in the cytoplasm. Component of the eukaryotic translation initiation factor 3 (eIF-3) complex, which is involved in protein synthesis of a specialized repertoire of mRNAs and, together with other initiation factors, stimulates binding of mRNA and methionyl-tRNAi to the 40S ribosome. The eIF-3 complex specifically targets and initiates translation of a subset of mRNAs involved in cell proliferation. In Cryptococcus neoformans var. neoformans serotype D (strain B-3501A) (Filobasidiella neoformans), this protein is Eukaryotic translation initiation factor 3 subunit I.